A 255-amino-acid chain; its full sequence is Imidazole glycerol phosphate synthase subunit HisF (255 aa).

Active-site residues include Asp12 and Asp131.

The protein belongs to the HisA/HisF family. Heterodimer of HisH and HisF.

The protein localises to the cytoplasm. It catalyses the reaction 5-[(5-phospho-1-deoxy-D-ribulos-1-ylimino)methylamino]-1-(5-phospho-beta-D-ribosyl)imidazole-4-carboxamide + L-glutamine = D-erythro-1-(imidazol-4-yl)glycerol 3-phosphate + 5-amino-1-(5-phospho-beta-D-ribosyl)imidazole-4-carboxamide + L-glutamate + H(+). The protein operates within amino-acid biosynthesis; L-histidine biosynthesis; L-histidine from 5-phospho-alpha-D-ribose 1-diphosphate: step 5/9. IGPS catalyzes the conversion of PRFAR and glutamine to IGP, AICAR and glutamate. The HisF subunit catalyzes the cyclization activity that produces IGP and AICAR from PRFAR using the ammonia provided by the HisH subunit. The sequence is that of Imidazole glycerol phosphate synthase subunit HisF from Vesicomyosocius okutanii subsp. Calyptogena okutanii (strain HA).